Reading from the N-terminus, the 156-residue chain is Small ribosomal subunit protein uS7 (156 aa).

It belongs to the universal ribosomal protein uS7 family. As to quaternary structure, part of the 30S ribosomal subunit. Contacts proteins S9 and S11.

Its function is as follows. One of the primary rRNA binding proteins, it binds directly to 16S rRNA where it nucleates assembly of the head domain of the 30S subunit. Is located at the subunit interface close to the decoding center, probably blocks exit of the E-site tRNA. The protein is Small ribosomal subunit protein uS7 of Acidobacterium capsulatum (strain ATCC 51196 / DSM 11244 / BCRC 80197 / JCM 7670 / NBRC 15755 / NCIMB 13165 / 161).